The chain runs to 66 residues: Large ribosomal subunit protein bL35 (66 aa).

Residues Gly20–Ile41 form a disordered region. Over residues Arg27 to Ile41 the composition is skewed to basic residues.

This sequence belongs to the bacterial ribosomal protein bL35 family.

The polypeptide is Large ribosomal subunit protein bL35 (Rhodopseudomonas palustris (strain BisB5)).